The sequence spans 925 residues: NADH:fumarate oxidoreductase (925 aa).

An FMN phosphoryl threonine modification is found at T447. The FAD site is built by A492, E511, N519, T520, A525, G526, and V633. A525 lines the fumarate pocket. A525 contributes to the succinate binding site. Succinate contacts are provided by H719, S731, and E732. S731 and E732 together coordinate fumarate. Residue R756 is the Proton donor of the active site. Position 859 (H859) interacts with fumarate. Residue H859 coordinates succinate. Residues H860 and E889 each coordinate FAD. Residues R899 and G902 each coordinate fumarate. The succinate site is built by R899 and G902. 2 residues coordinate FAD: A904 and V905.

The protein belongs to the FAD-dependent oxidoreductase 2 family. FRD/SDH subfamily. In terms of assembly, monomer. It depends on FAD as a cofactor. FMN is required as a cofactor. Is flavinylated on Thr-447 by ApbE2, encoded in a neighboring gene. Flavinylation is essential for catalytic activity.

It localises to the cytoplasm. The catalysed reaction is succinate + NAD(+) = fumarate + NADH + H(+). Catalyzes the anaerobic reduction of fumarate to succinate. Uses NADH as the inherent electron donor in this process. Is involved in anaerobic fumarate respiration in K.pneumoniae. This is NADH:fumarate oxidoreductase from Klebsiella pneumoniae (strain 342).